Reading from the N-terminus, the 620-residue chain is bZIP transcription factor 49 (620 aa).

Residues 1 to 287 (MAEPVLEDTY…VAKVKKFKKV (287 aa)) lie on the Cytoplasmic side of the membrane. The span at 109–135 (SSCYNRESPTDSDFSGTSQSLSFSGQD) shows a compositional bias: polar residues. The segment at 109–155 (SSCYNRESPTDSDFSGTSQSLSFSGQDSAKRKTEIEEDSSDESRRLG) is disordered. One can recognise a bZIP domain in the interval 172 to 235 (EKKKNVRLVR…VTLRQQMGTR (64 aa)). The basic motif stretch occupies residues 173-205 (KKKNVRLVRNRESAHLSRQRKKHYVEELEDKVK). Positions 211-218 (ISELSSKM) are leucine-zipper. A helical membrane pass occupies residues 288-308 (ASFSVFGFLFCMFLFGALVNI). Over 309 to 620 (SYGEYKSNYV…RPDVPHLMTS (312 aa)) the chain is Lumenal. 3 disordered regions span residues 343–364 (DSDQ…PRNS), 398–460 (ARDS…SNDQ), and 505–557 (PASP…RETK). N-linked (GlcNAc...) asparagine glycosylation is found at asparagine 351 and asparagine 363. Polar residues predominate over residues 352–364 (VSETENLGPPRNS). Composition is skewed to basic and acidic residues over residues 398–409 (ARDSETKNEEGK) and 432–441 (RTRDVSKHLY). Composition is skewed to polar residues over residues 447-460 (GLSS…SNDQ) and 508-519 (PHTQQCKNTSDT). N-linked (GlcNAc...) asparagine glycosylation is present at asparagine 515. The RRIL cleavage motif signature appears at 526-529 (RRIL). Residues asparagine 539 and asparagine 546 are each glycosylated (N-linked (GlcNAc...) asparagine). Residues 540-557 (LTKEDHNSSSKDKFRETK) are compositionally biased toward basic and acidic residues.

This sequence belongs to the bZIP family. Interacts with BZIP28.

It is found in the endoplasmic reticulum membrane. It localises to the nucleus. Functionally, transcriptional activator involved in stress responses. This Arabidopsis thaliana (Mouse-ear cress) protein is bZIP transcription factor 49.